Consider the following 302-residue polypeptide: Probable phytol kinase 1, chloroplastic (302 aa).

A chloroplast-targeting transit peptide spans 1 to 57 (MTLLSSHLLVFSAVHHRAPPTTTTRNSPTTNHTVRFLCSPGVPPAVRLDQRLPRFVV). 7 helical membrane passes run 65–83 (LLYN…YALV), 103–123 (LVHI…SNSP), 128–148 (FAAF…LSLA), 164–184 (LELL…ALVF), 189–209 (PIGV…DIIG), 232–252 (LVFG…LGHV), and 263–283 (VAFI…KVVD).

It belongs to the polyprenol kinase family.

It localises to the plastid. It is found in the chloroplast membrane. The catalysed reaction is phytol + CTP = phytyl phosphate + CDP + H(+). It participates in cofactor biosynthesis; tocopherol biosynthesis. In terms of biological role, involved in the activation and reutilization of phytol from chlorophyll degradation in plant metabolism, including tocopherol biosynthesis. Catalyzes the conversion of phytol to phytol monophosphate (PMP). This Glycine max (Soybean) protein is Probable phytol kinase 1, chloroplastic.